A 208-amino-acid chain; its full sequence is Thymidylate kinase (208 aa).

13-20 contributes to the ATP binding site; it reads GLEGAGKS.

This sequence belongs to the thymidylate kinase family.

It catalyses the reaction dTMP + ATP = dTDP + ADP. In terms of biological role, phosphorylation of dTMP to form dTDP in both de novo and salvage pathways of dTTP synthesis. The polypeptide is Thymidylate kinase (Shewanella amazonensis (strain ATCC BAA-1098 / SB2B)).